We begin with the raw amino-acid sequence, 883 residues long: MTSERYNARDAEPRWQAEWDRQAIFATKNDDPREKYYVLEMFPYPSGRIHIGHVRNYTLGDVIARYMRARGYNVLHPMGWDAFGLPAENAAIERKIAPKAWTYDNIKAMKKQLRSIGLSLDWSREIATCDPAYYKHQQKMFLDFLRAGLAEREKRKINWDPVDMTVLANEQVIDGRGWRSGAVVEQREMNQWVFKITKFSQELLDALGTLDRWPDKVRLMQRNWIGRSEGLLIRFALDATTTPNNESELKIFTTRPDTLFGARFMAIAPDHPLAQAAAKDNPALAGFIAECKQRGTAQAEIDTAEKMGFDTGIRAIHPFDAAWALPVYVANFILMEYGTGAIFGCPAHDQRDLDFVNKYGLGNTPVVCPEGQDPASFVITDTAYDGDGRMINSRFLDGMSADAAKEEVAKRLEGETRGNEPVAERKVNFRLRDWGISRQRYWGCPIPVIHCPNCDVVPVPEKDLPVTLPEDVTFDRPGNALDHHPTWKHVDCPKCGGKATRETDTMDTFVDSSWYFARFTDPWNDSAPTTREVADRMLPVDQYIGGVEHAILHLLYSRFFTRAMKATGHLGMDEPFKGMFTQGMVVHETYRKPDGGWASPEEVRIEVDGNNRRATLITTGEPVEIGAVEKMSKSKRNTVDPDDIIGSYGADTARWFMLSDSPPDRDVIWSEEGVQGAARFMQRLWRLVNEAADAGKAAPQDRPATFGSDALTLRKAAHGALDRVSTGIERLHFNVCLANIREFANELADALARSRSNKSAPARDLAPDLSWSLREAAIILVQIFSPMMPHLAEECWQRALGQTGLVSQARWPQIEPDLLIEDSITLPVQVNGKKRGEVTVASDAGNPEIEAAVLALDAVKQALGGKQARKIIIVPRRIVSVVG.

The short motif at 43–53 (PYPSGRIHIGH) is the 'HIGH' region element. A 'KMSKS' region motif is present at residues 630-634 (KMSKS). K633 contributes to the ATP binding site.

The protein belongs to the class-I aminoacyl-tRNA synthetase family.

Its subcellular location is the cytoplasm. It carries out the reaction tRNA(Leu) + L-leucine + ATP = L-leucyl-tRNA(Leu) + AMP + diphosphate. The polypeptide is Leucine--tRNA ligase (Nitrobacter winogradskyi (strain ATCC 25391 / DSM 10237 / CIP 104748 / NCIMB 11846 / Nb-255)).